The sequence spans 283 residues: Xyloglucan endotransglucosylase/hydrolase 2 (283 aa).

The signal sequence occupies residues 1 to 30 (MAPSSAHNNGFYVLMLVGIVVSTMVATCAG). The GH16 domain occupies 31-220 (SFYQDFDLTW…WSKAPFTAYY (190 aa)). Residue E106 is the Nucleophile of the active site. The Proton donor role is filled by E110. E110 contributes to the xyloglucan binding site. N114 carries N-linked (GlcNAc...) asparagine glycosylation. Xyloglucan contacts are provided by residues 123–125 (HTN), 133–135 (NRE), 199–200 (DW), G204, and R272. A disulfide bridge links C267 with C281.

Belongs to the glycosyl hydrolase 16 family. Contains at least one intrachain disulfide bond essential for its enzymatic activity. Post-translationally, N-glycosylated; not essential for its enzymatic activity.

Its subcellular location is the secreted. It is found in the cell wall. The protein localises to the extracellular space. The protein resides in the apoplast. The enzyme catalyses breaks a beta-(1-&gt;4) bond in the backbone of a xyloglucan and transfers the xyloglucanyl segment on to O-4 of the non-reducing terminal glucose residue of an acceptor, which can be a xyloglucan or an oligosaccharide of xyloglucan.. Functionally, catalyzes xyloglucan endohydrolysis (XEH) and/or endotransglycosylation (XET). Cleaves and religates xyloglucan polymers, an essential constituent of the primary cell wall, and thereby participates in cell wall construction of growing tissues. The chain is Xyloglucan endotransglucosylase/hydrolase 2 from Glycine max (Soybean).